The chain runs to 290 residues: Protein MGF 110-9L (290 aa).

Positions 1–19 (MKVIVLLLVLAVMQPVIQS) are cleaved as a signal peptide. The stretch at 1–160 (MKVIVLLLVL…QYSRMRMQAA (160 aa)) is one A repeat. Helical transmembrane passes span 128–148 (VENI…IGYV) and 163–183 (LLIF…IIMN). Residues 161–290 (TRLLIFLGLY…KRHVINQDDL (130 aa)) form a B repeat.

The protein belongs to the asfivirus MGF 110 family.

The protein localises to the membrane. This is Protein MGF 110-9L from Ornithodoros (relapsing fever ticks).